A 529-amino-acid polypeptide reads, in one-letter code: Peptide chain release factor 3 (529 aa).

Positions 11–280 (SKRRTFAIIS…GLVAWAPAPM (270 aa)) constitute a tr-type G domain. GTP contacts are provided by residues 20–27 (SHPDAGKT), 88–92 (DTPGH), and 142–145 (NKLD).

Belongs to the TRAFAC class translation factor GTPase superfamily. Classic translation factor GTPase family. PrfC subfamily.

The protein localises to the cytoplasm. Its function is as follows. Increases the formation of ribosomal termination complexes and stimulates activities of RF-1 and RF-2. It binds guanine nucleotides and has strong preference for UGA stop codons. It may interact directly with the ribosome. The stimulation of RF-1 and RF-2 is significantly reduced by GTP and GDP, but not by GMP. The protein is Peptide chain release factor 3 of Pectobacterium carotovorum subsp. carotovorum (strain PC1).